The primary structure comprises 196 residues: dTDP-4-dehydro-6-deoxyglucose 3-epimerase (196 aa).

Substrate contacts are provided by residues arginine 21, glutamate 26, 45–47 (QVN), and arginine 57. Histidine 60 (proton acceptor) is an active-site residue. Substrate-binding residues include lysine 70 and arginine 117. Catalysis depends on tyrosine 130, which acts as the Proton donor. 2 residues coordinate substrate: glutamate 141 and arginine 166.

Belongs to the dTDP-4-dehydrorhamnose 3,5-epimerase family. Homodimer.

It carries out the reaction dTDP-4-dehydro-6-deoxy-alpha-D-glucose = dTDP-4-dehydro-6-deoxy-alpha-D-allose. It participates in antibiotic biosynthesis. Functionally, involved in the biosynthesis of dTDP-6-deoxy-D-allose, an intermediate in the biosynthesis of mycinose, which is one of the two unusual sugars attached to the 16-membered macrolactone ring of the aglycone antibiotic dihydrochalcomycin (GERI-155). Catalyzes the conversion of dTDP-4-oxo-6-deoxyglucose to dTDP-4-oxo-6-deoxyallose, via a C-3 epimerization. The protein is dTDP-4-dehydro-6-deoxyglucose 3-epimerase of Streptomyces sp.